A 101-amino-acid chain; its full sequence is Urease subunit beta (101 aa).

The protein belongs to the urease beta subunit family. As to quaternary structure, heterotrimer of UreA (gamma), UreB (beta) and UreC (alpha) subunits. Three heterotrimers associate to form the active enzyme.

The protein resides in the cytoplasm. The enzyme catalyses urea + 2 H2O + H(+) = hydrogencarbonate + 2 NH4(+). The protein operates within nitrogen metabolism; urea degradation; CO(2) and NH(3) from urea (urease route): step 1/1. The chain is Urease subunit beta from Cupriavidus pinatubonensis (strain JMP 134 / LMG 1197) (Cupriavidus necator (strain JMP 134)).